The sequence spans 255 residues: Flagellar brake protein YcgR (255 aa).

Residues 122-240 (QRRTYFRINT…ERDLQQVIFE (119 aa)) enclose the PilZ domain.

The protein belongs to the YcgR family. In terms of assembly, monomer. Interacts with the flagellar basal bodies.

The protein resides in the bacterial flagellum basal body. In terms of biological role, acts as a flagellar brake, regulating swimming and swarming in a bis-(3'-5') cyclic diguanylic acid (c-di-GMP)-dependent manner. Binds 1 c-di-GMP dimer per subunit. Increasing levels of c-di-GMP lead to decreased motility. The chain is Flagellar brake protein YcgR from Pectobacterium carotovorum subsp. carotovorum (strain PC1).